A 325-amino-acid polypeptide reads, in one-letter code: Diaminopimelate epimerase (325 aa).

2 residues coordinate substrate: Asn-11 and Asn-69. The Proton donor role is filled by Cys-78. Substrate is bound by residues Gly-79–Asn-80, Asn-166, Asn-203, and Glu-221–Arg-222. Cys-230 functions as the Proton acceptor in the catalytic mechanism. Gly-231–Thr-232 is a binding site for substrate.

This sequence belongs to the diaminopimelate epimerase family. Homodimer.

It localises to the cytoplasm. The enzyme catalyses (2S,6S)-2,6-diaminopimelate = meso-2,6-diaminopimelate. It functions in the pathway amino-acid biosynthesis; L-lysine biosynthesis via DAP pathway; DL-2,6-diaminopimelate from LL-2,6-diaminopimelate: step 1/1. Catalyzes the stereoinversion of LL-2,6-diaminopimelate (L,L-DAP) to meso-diaminopimelate (meso-DAP), a precursor of L-lysine and an essential component of the bacterial peptidoglycan. The chain is Diaminopimelate epimerase from Ligilactobacillus salivarius (strain UCC118) (Lactobacillus salivarius).